Here is a 233-residue protein sequence, read N- to C-terminus: UPF0280 protein AF_0649 (233 aa).

The protein belongs to the UPF0280 family.

The polypeptide is UPF0280 protein AF_0649 (Archaeoglobus fulgidus (strain ATCC 49558 / DSM 4304 / JCM 9628 / NBRC 100126 / VC-16)).